The sequence spans 111 residues: Flagellar hook-basal body complex protein FliE (111 aa).

This sequence belongs to the FliE family.

The protein resides in the bacterial flagellum basal body. The sequence is that of Flagellar hook-basal body complex protein FliE from Clostridium acetobutylicum (strain ATCC 824 / DSM 792 / JCM 1419 / IAM 19013 / LMG 5710 / NBRC 13948 / NRRL B-527 / VKM B-1787 / 2291 / W).